A 358-amino-acid chain; its full sequence is DNA polymerase IV (358 aa).

The UmuC domain maps to isoleucine 4–glycine 185. 2 residues coordinate Mg(2+): aspartate 8 and aspartate 103. The active site involves glutamate 104.

The protein belongs to the DNA polymerase type-Y family. In terms of assembly, monomer. Mg(2+) serves as cofactor.

It is found in the cytoplasm. The catalysed reaction is DNA(n) + a 2'-deoxyribonucleoside 5'-triphosphate = DNA(n+1) + diphosphate. Its function is as follows. Poorly processive, error-prone DNA polymerase involved in untargeted mutagenesis. Copies undamaged DNA at stalled replication forks, which arise in vivo from mismatched or misaligned primer ends. These misaligned primers can be extended by PolIV. Exhibits no 3'-5' exonuclease (proofreading) activity. May be involved in translesional synthesis, in conjunction with the beta clamp from PolIII. This Shewanella baltica (strain OS155 / ATCC BAA-1091) protein is DNA polymerase IV.